A 138-amino-acid polypeptide reads, in one-letter code: Large ribosomal subunit protein eL32 (138 aa).

It belongs to the eukaryotic ribosomal protein eL32 family.

The chain is Large ribosomal subunit protein eL32 (rpl32e) from Saccharolobus solfataricus (strain ATCC 35092 / DSM 1617 / JCM 11322 / P2) (Sulfolobus solfataricus).